The primary structure comprises 236 residues: uncharacterized protein (236 aa).

Belongs to the RHS family.

This is an uncharacterized protein from Escherichia coli (strain K12).